The chain runs to 261 residues: tRNA pseudouridine synthase A (261 aa).

The active-site Nucleophile is Asp51. Position 109 (Tyr109) interacts with substrate.

Belongs to the tRNA pseudouridine synthase TruA family. Homodimer.

The enzyme catalyses uridine(38/39/40) in tRNA = pseudouridine(38/39/40) in tRNA. Functionally, formation of pseudouridine at positions 38, 39 and 40 in the anticodon stem and loop of transfer RNAs. The chain is tRNA pseudouridine synthase A from Shewanella sp. (strain ANA-3).